The chain runs to 474 residues: MSIKHWMASSVSVTALVMTALLNITAVSAEEKGLVDPRNDAFEQNHPDQYQSWKKTSESVEIEDALAEDPNMVILWAGYGFAKDYNKARGHFYALDDVRQTLRTGGPQDAKSGPMPMACWSCKSPDVARVIDERGEDGYFEGKWARLGAEIANPIGCADCHDTRSEKFKNGEPELALTRPYVERAFQAINKPFEQQSRLDKQASVCAQCHVEYYFTGPTKAVKFPWDMGTGVQQMEEYYDALGFADWTHAVSKAPMLKAQHPGFETWREGIHGKNKVVCVDCHMPKVKKEDGTVYTDHKVGNPFDRFEDTCAQCHTQSKDQLREIVSTRKAQVLNMKLTAEKQIVAAHFEAGAAWKAGATEEEMKPILQDIRHAQWRWDYAIASHGVHMHAPEVALEVLGTAVDRAADARTKLVRLLATKGITEPVQIPDISTKAAAQKALGMDMEKMNAEKQHFLKTVVPDWDKAAAERESKY.

Positions 1–29 (MSIKHWMASSVSVTALVMTALLNITAVSA) are cleaved as a signal peptide. His-91 contributes to the heme c binding site. Cys-119, Cys-122, and Lys-123 together coordinate heme. The heme c site is built by Cys-157, Cys-160, His-161, Cys-206, Cys-209, and His-210. Glu-212, Tyr-213, Lys-258, and Gln-260 together coordinate Ca(2+). Position 213 (Tyr-213) interacts with substrate. A substrate-binding site is contributed by His-261. Residues His-272, Cys-279, Cys-282, His-283, His-298, Cys-311, Cys-314, His-315, and His-390 each coordinate heme c.

It belongs to the cytochrome c-552 family. The cofactor is Ca(2+). Requires heme c as cofactor.

It is found in the periplasm. It catalyses the reaction 6 Fe(III)-[cytochrome c] + NH4(+) + 2 H2O = 6 Fe(II)-[cytochrome c] + nitrite + 8 H(+). It participates in nitrogen metabolism; nitrate reduction (assimilation). In terms of biological role, catalyzes the reduction of nitrite to ammonia, consuming six electrons in the process. In Vibrio vulnificus (strain CMCP6), this protein is Cytochrome c-552.